Reading from the N-terminus, the 92-residue chain is UPF0298 protein BH2594 (92 aa).

Belongs to the UPF0298 family.

It is found in the cytoplasm. This Halalkalibacterium halodurans (strain ATCC BAA-125 / DSM 18197 / FERM 7344 / JCM 9153 / C-125) (Bacillus halodurans) protein is UPF0298 protein BH2594.